The sequence spans 238 residues: Large ribosomal subunit protein uL1 (238 aa).

Belongs to the universal ribosomal protein uL1 family. In terms of assembly, part of the 50S ribosomal subunit.

Functionally, binds directly to 23S rRNA. The L1 stalk is quite mobile in the ribosome, and is involved in E site tRNA release. In terms of biological role, protein L1 is also a translational repressor protein, it controls the translation of the L11 operon by binding to its mRNA. The chain is Large ribosomal subunit protein uL1 from Rippkaea orientalis (strain PCC 8801 / RF-1) (Cyanothece sp. (strain PCC 8801)).